Reading from the N-terminus, the 630-residue chain is Chaperone protein HtpG (630 aa).

The interval 1-339 (MSHTETHAFQ…SNDLPLNVSR (339 aa)) is a; substrate-binding. Residues 340–556 (EILQSNRVVD…EGDISAHMAR (217 aa)) form a b region. The c stretch occupies residues 557 to 630 (MMEQMGQAMP…RMNALLSEVI (74 aa)).

The protein belongs to the heat shock protein 90 family. Homodimer.

It localises to the cytoplasm. In terms of biological role, molecular chaperone. Has ATPase activity. In Hydrogenovibrio crunogenus (strain DSM 25203 / XCL-2) (Thiomicrospira crunogena), this protein is Chaperone protein HtpG.